Here is a 134-residue protein sequence, read N- to C-terminus: Phosphomevalonate dehydratase small subunit (134 aa).

The Proton acceptor role is filled by S62.

This sequence belongs to the AcnX type II small subunit family. Heterodimer composed of a large subunit (PMDh-L) and a small subunit (PMDh-S).

The enzyme catalyses (R)-5-phosphomevalonate = (2E)-3-methyl-5-phosphooxypent-2-enoate + H2O. Its pathway is isoprenoid biosynthesis; isopentenyl diphosphate biosynthesis via mevalonate pathway. Its function is as follows. Component of a hydro-lyase that catalyzes the dehydration of mevalonate 5-phosphate (MVA5P) to form trans-anhydromevalonate 5-phosphate (tAHMP). Involved in the archaeal mevalonate (MVA) pathway, which provides fundamental precursors for isoprenoid biosynthesis, such as isopentenyl diphosphate (IPP) and dimethylallyl diphosphate (DMAPP). This chain is Phosphomevalonate dehydratase small subunit, found in Pyrococcus horikoshii (strain ATCC 700860 / DSM 12428 / JCM 9974 / NBRC 100139 / OT-3).